A 1097-amino-acid polypeptide reads, in one-letter code: Importin-5 (1097 aa).

Ala-2 is subject to N-acetylalanine. 24 HEAT repeats span residues 5 to 38 (AAEQ…NIPG), 43 to 77 (TFLL…FDEV), 95 to 122 (MIIQ…NLID), 130 to 157 (PEGL…IFWN), 167 to 201 (QHYL…AAFI), 210 to 246 (LFKH…IADT), 254 to 289 (HLEA…LSET), 298 to 350 (TNIV…ACGL), 352 to 386 (GKLV…SAIG), 390 to 430 (HQQM…ATDF), 432 to 472 (PGFQ…FTED), 475 to 523 (KSLL…ADTA), 525 to 568 (EKFV…GLAV), 570 to 615 (KEKF…CKIL), 617 to 692 (KEFQ…AKEL), 695 to 737 (GFVE…ARVR), 741 to 780 (YLTQ…IEVM), 787 to 853 (NEHF…FSSY), 856 to 895 (KVLP…IEHC), 903 to 935 (AEYF…MAQY), 943 to 983 (FCTE…MKFK), 990 to 1021 (EEVL…DLIE), 1032 to 1067 (NTNL…VVRQ), and 1070 to 1093 (TSGG…IQEL). The Importin N-terminal domain maps to 28–99 (QAEETYENIP…KSELLMIIQM (72 aa)). Residues 325–375 (DELEDDDFDSNAVAGESALDRMACGLGGKLVLPMIKEHIMQMLQNPDWKYR) are ran-GTP binding. Ser-827 carries the post-translational modification Phosphoserine.

It belongs to the importin beta family. Importin beta-3 subfamily. In terms of assembly, interacts with RPS7 and RPL5. Interacts with RPL23A (via BIB domain). Interacts with H2A, H2B, H3 and H4 histones. Interacts with CPEB3; this mediates CPEB3 nuclear import following neuronal stimulation which enhances the interaction in a RAN-regulated manner. Interacts with AIFM2; this interaction likely mediates the translocation of AIFM2 into the nucleus upon oxidative stress. Interacts with STX3 (isoform 3). Interacts with SRP19. (Microbial infection) Interacts with HIV-1 Rev.

It is found in the cytoplasm. Its subcellular location is the nucleus. The protein localises to the nucleolus. Functions in nuclear protein import as nuclear transport receptor. Serves as receptor for nuclear localization signals (NLS) in cargo substrates. Is thought to mediate docking of the importin/substrate complex to the nuclear pore complex (NPC) through binding to nucleoporin and the complex is subsequently translocated through the pore by an energy requiring, Ran-dependent mechanism. At the nucleoplasmic side of the NPC, Ran binds to the importin, the importin/substrate complex dissociates and importin is re-exported from the nucleus to the cytoplasm where GTP hydrolysis releases Ran. The directionality of nuclear import is thought to be conferred by an asymmetric distribution of the GTP- and GDP-bound forms of Ran between the cytoplasm and nucleus. Mediates the nuclear import of ribosomal proteins RPL23A, RPS7 and RPL5. In vitro, mediates nuclear import of H2A, H2B, H3 and H4 histones. Binds to CPEB3 and mediates its nuclear import following neuronal stimulation. In case of HIV-1 infection, binds and mediates the nuclear import of HIV-1 Rev. The chain is Importin-5 (IPO5) from Homo sapiens (Human).